Consider the following 835-residue polypeptide: Leucine--tRNA ligase (835 aa).

Positions 42–52 (PYPSGRIHMGH) match the 'HIGH' region motif. The 'KMSKS' region motif lies at 612–616 (KMSKS). K615 is an ATP binding site.

This sequence belongs to the class-I aminoacyl-tRNA synthetase family.

The protein resides in the cytoplasm. The catalysed reaction is tRNA(Leu) + L-leucine + ATP = L-leucyl-tRNA(Leu) + AMP + diphosphate. This chain is Leucine--tRNA ligase, found in Rhizorhabdus wittichii (strain DSM 6014 / CCUG 31198 / JCM 15750 / NBRC 105917 / EY 4224 / RW1) (Sphingomonas wittichii).